Here is an 830-residue protein sequence, read N- to C-terminus: GPI ethanolamine phosphate transferase 2 (830 aa).

Positions 1 to 32 (MNLKQFTCLSCAQLLAILLFIFAFFPRKIVLT) are cleaved as a signal peptide. Topologically, residues 33 to 321 (GISKQDPDQD…QYLETVQQID (289 aa)) are lumenal. N-linked (GlcNAc...) asparagine glycans are attached at residues N145, N185, and N298. A helical transmembrane segment spans residues 322-342 (IVPTIAALFGMPIPMNSVGII). The Cytoplasmic portion of the chain corresponds to 343–405 (IPDFLQLLPN…TKSATNYNYP (63 aa)). The helical transmembrane segment at 406–426 (LLTLAFVGFLIITIIAIYVLL) threads the bilayer. Topologically, residues 427-439 (RYSGPDFWQLRVS) are lumenal. A helical membrane pass occupies residues 440 to 460 (SLSVLLVSIILGVSTFASSFI). Residues 461–469 (EEEHQLWWW) lie on the Cytoplasmic side of the membrane. A helical transmembrane segment spans residues 470–490 (IVTAFSAVPLFVYRLNVLIIV). At 491 to 533 (RWFIMMACVRSIKFWNNSGQKFIYSNVMSNLLNQNPSWKWCLN) the chain is on the lumenal side. N-linked (GlcNAc...) asparagine glycosylation is present at N506. A helical membrane pass occupies residues 534–554 (MLTFLVLIMASAGFQVLHFIV). At 555–598 (TTILVGLCFTYKISWEIVNGNQAEIPLFMHDLLAKIDFAPTESN) the chain is on the cytoplasmic side. A helical transmembrane segment spans residues 599–619 (LIVLARVFFQAWAIVVISRLV). Residues 620 to 651 (LTKLKVLNKNYLIKDMKVYITILLMFQTSSQN) lie on the Lumenal side of the membrane. The chain crosses the membrane as a helical span at residues 652–672 (IGQFLVFQILESQIFYFFQNI). Topologically, residues 673-682 (PTASLTSTSK) are cytoplasmic. A helical transmembrane segment spans residues 683 to 703 (IYFSNLVSLILQNFTFFQFGG). Residues 704-724 (TNSISTIDLGNAYHGVSSDYN) lie on the Lumenal side of the membrane. Residues 725-745 (IYVVGILMSVANFAPAIYWSM) traverse the membrane as a helical segment. Residues 746–768 (LPWSINYASIPAQVKLQTFIRSK) are Cytoplasmic-facing. The chain crosses the membrane as a helical span at residues 769–789 (LPAFTYHCIFGTCLMTACVVL). Residues 790-805 (RFHLFIWSVFSPKLCY) lie on the Lumenal side of the membrane. The chain crosses the membrane as a helical span at residues 806-826 (FLGWNFVMGLLNGWLPELALL). Residues 827–830 (CALD) lie on the Cytoplasmic side of the membrane.

This sequence belongs to the PIGG/PIGN/PIGO family. PIGG subfamily. N-glycosylated.

The protein localises to the endoplasmic reticulum membrane. It functions in the pathway glycolipid biosynthesis; glycosylphosphatidylinositol-anchor biosynthesis. Its function is as follows. Ethanolamine phosphate transferase involved in glycosylphosphatidylinositol-anchor biosynthesis. Transfers ethanolamine phosphate to the GPI second mannose. Although not essential, addition of ethanolamine phosphate to the second mannose plays an important role in cell separation via the GPI-based modification of daughter-specific proteins. In Saccharomyces cerevisiae (strain ATCC 204508 / S288c) (Baker's yeast), this protein is GPI ethanolamine phosphate transferase 2 (LAS21).